The sequence spans 154 residues: Ribosome maturation factor RimP (154 aa).

It belongs to the RimP family.

The protein resides in the cytoplasm. Functionally, required for maturation of 30S ribosomal subunits. This is Ribosome maturation factor RimP from Salmonella gallinarum (strain 287/91 / NCTC 13346).